The primary structure comprises 482 residues: Protein farnesyltransferase subunit beta (482 aa).

4 PFTB repeats span residues 131-172 (ESNA…VTLG), 182-223 (REKM…SILN), 230-271 (TQGL…ILIN), and 278-319 (LDSL…VLLQ). Residues 256–259 (HGGY) and 298–301 (RTNK) contribute to the (2E,6E)-farnesyl diphosphate site. Zn(2+) contacts are provided by aspartate 304 and cysteine 306. 307 to 310 (YTFW) serves as a coordination point for (2E,6E)-farnesyl diphosphate. Positions 329-372 (VHGSSHISEGTNEEHHAHDEDDLEDSDDDDDSDEDNDEDSVNGH) are disordered. The segment covering 348–368 (EDDLEDSDDDDDSDEDNDEDS) has biased composition (acidic residues). The PFTB 5 repeat unit spans residues 391 to 433 (SLGLQRYVLLCSKIPDGGFRDKPRKPRDFYHTCYCLSGLSVAQ). Histidine 421 serves as a coordination point for Zn(2+).

Belongs to the protein prenyltransferase subunit beta family. In terms of assembly, heterodimer of FTA and FTB (farnesyltransferase). Heterodimer of an alpha and a beta subunit. Requires Zn(2+) as cofactor.

The enzyme catalyses L-cysteinyl-[protein] + (2E,6E)-farnesyl diphosphate = S-(2E,6E)-farnesyl-L-cysteinyl-[protein] + diphosphate. In terms of biological role, catalyzes the transfer of a farnesyl moiety from farnesyl diphosphate to a cysteine at the fourth position from the C-terminus of several proteins having the C-terminal sequence Cys-aliphatic-aliphatic-X (CaaX). The beta subunit is responsible for peptide-binding. Acts as an abscisic acid (ABA) negative regulator by mediating ASG2 farnesylation and consequently monitoring its subcellular localization. Involved in responses to salt (NaCl) and osmotic (e.g. in response to mannitol and PEG) stresses. This Arabidopsis thaliana (Mouse-ear cress) protein is Protein farnesyltransferase subunit beta (FTB).